A 65-amino-acid polypeptide reads, in one-letter code: Large ribosomal subunit protein uL29 (65 aa).

The disordered stretch occupies residues 30–49 (ERSSVAMGGAPSSPGKMRSI).

It belongs to the universal ribosomal protein uL29 family.

The chain is Large ribosomal subunit protein uL29 from Picrophilus torridus (strain ATCC 700027 / DSM 9790 / JCM 10055 / NBRC 100828 / KAW 2/3).